Here is a 152-residue protein sequence, read N- to C-terminus: Interleukin-3 (152 aa).

Positions 1–19 (MSRLPVLLLLQLLVRPGLQ) are cleaved as a signal peptide. N-linked (GlcNAc...) asparagine glycans are attached at residues asparagine 34 and asparagine 89. An intrachain disulfide couples cysteine 35 to cysteine 103.

Belongs to the IL-3 family. In terms of assembly, interacts with IL3RA. As to expression, activated T-cells, mast cells, natural killer cells.

Its subcellular location is the secreted. In terms of biological role, cytokine secreted predominantly by activated T-lymphocytes as well as mast cells and osteoblastic cells that controls the production and differentiation of hematopoietic progenitor cells into lineage-restricted cells. Also stimulates mature basophils, eosinophils, and monocytes to become functionally activated. In addition, plays an important role in neural cell proliferation and survival. Participates as well in bone homeostasis and inhibits osteoclast differentiation by preventing NF-kappa-B nuclear translocation and activation. Mechanistically, exerts its biological effects through a receptor composed of IL3RA subunit and a signal transducing subunit IL3RB. Receptor stimulation results in the rapid activation of JAK2 kinase activity leading to STAT5-mediated transcriptional program. Alternatively, contributes to cell survival under oxidative stress in non-hematopoietic systems by activating pathways mediated by PI3K/AKT and ERK. This is Interleukin-3 from Homo sapiens (Human).